The sequence spans 152 residues: Transcriptional regulator MraZ (152 aa).

2 consecutive SpoVT-AbrB domains span residues 5–52 and 81–124; these read ASAI…PLKE and ATEC…SDAE.

The protein belongs to the MraZ family. Forms oligomers.

Its subcellular location is the cytoplasm. It localises to the nucleoid. The sequence is that of Transcriptional regulator MraZ from Pasteurella multocida (strain Pm70).